We begin with the raw amino-acid sequence, 434 residues long: Histidinol dehydrogenase (434 aa).

NAD(+) is bound by residues tyrosine 130, glutamine 188, and asparagine 211. The substrate site is built by serine 237, glutamine 259, and histidine 262. Zn(2+) is bound by residues glutamine 259 and histidine 262. Active-site proton acceptor residues include glutamate 326 and histidine 327. The substrate site is built by histidine 327, aspartate 360, glutamate 414, and histidine 419. Aspartate 360 serves as a coordination point for Zn(2+). Position 419 (histidine 419) interacts with Zn(2+).

The protein belongs to the histidinol dehydrogenase family. As to quaternary structure, homodimer. Requires Zn(2+) as cofactor.

It carries out the reaction L-histidinol + 2 NAD(+) + H2O = L-histidine + 2 NADH + 3 H(+). The protein operates within amino-acid biosynthesis; L-histidine biosynthesis; L-histidine from 5-phospho-alpha-D-ribose 1-diphosphate: step 9/9. In terms of biological role, catalyzes the sequential NAD-dependent oxidations of L-histidinol to L-histidinaldehyde and then to L-histidine. This Escherichia coli O6:H1 (strain CFT073 / ATCC 700928 / UPEC) protein is Histidinol dehydrogenase.